The following is a 195-amino-acid chain: Imidazoleglycerol-phosphate dehydratase (195 aa).

This sequence belongs to the imidazoleglycerol-phosphate dehydratase family.

The protein localises to the cytoplasm. It catalyses the reaction D-erythro-1-(imidazol-4-yl)glycerol 3-phosphate = 3-(imidazol-4-yl)-2-oxopropyl phosphate + H2O. Its pathway is amino-acid biosynthesis; L-histidine biosynthesis; L-histidine from 5-phospho-alpha-D-ribose 1-diphosphate: step 6/9. The chain is Imidazoleglycerol-phosphate dehydratase from Thermotoga neapolitana (strain ATCC 49049 / DSM 4359 / NBRC 107923 / NS-E).